The following is a 123-amino-acid chain: Hydrogenase maturation factor HypA (123 aa).

Histidine 2 provides a ligand contact to Ni(2+). 4 residues coordinate Zn(2+): cysteine 77, cysteine 80, cysteine 96, and cysteine 99.

This sequence belongs to the HypA/HybF family.

Involved in the maturation of [NiFe] hydrogenases. Required for nickel insertion into the metal center of the hydrogenase. The polypeptide is Hydrogenase maturation factor HypA (Methanococcus aeolicus (strain ATCC BAA-1280 / DSM 17508 / OCM 812 / Nankai-3)).